The chain runs to 349 residues: S-adenosylmethionine:tRNA ribosyltransferase-isomerase (349 aa).

This sequence belongs to the QueA family. As to quaternary structure, monomer.

The protein localises to the cytoplasm. The catalysed reaction is 7-aminomethyl-7-carbaguanosine(34) in tRNA + S-adenosyl-L-methionine = epoxyqueuosine(34) in tRNA + adenine + L-methionine + 2 H(+). The protein operates within tRNA modification; tRNA-queuosine biosynthesis. In terms of biological role, transfers and isomerizes the ribose moiety from AdoMet to the 7-aminomethyl group of 7-deazaguanine (preQ1-tRNA) to give epoxyqueuosine (oQ-tRNA). This Ruegeria pomeroyi (strain ATCC 700808 / DSM 15171 / DSS-3) (Silicibacter pomeroyi) protein is S-adenosylmethionine:tRNA ribosyltransferase-isomerase.